An 82-amino-acid chain; its full sequence is Alpha-defensin 17 (82 aa).

The signal sequence occupies residues 1-8; it reads LLAFQVQA. A disordered region spans residues 1–43; it reads LLAFQVQADPIQNTDEETKTEEQPGEEDQAVSVSFGDPEGTSL. A propeptide spanning residues 9–47 is cleaved from the precursor; that stretch reads DPIQNTDEETKTEEQPGEEDQAVSVSFGDPEGTSLQEES. Cystine bridges form between Cys-53–Cys-81, Cys-55–Cys-70, and Cys-60–Cys-80.

The protein belongs to the alpha-defensin family.

It is found in the secreted. Functionally, probably contributes to the antimicrobial barrier function of the small bowel mucosa. This is Alpha-defensin 17 (Defa17) from Mus musculus (Mouse).